The primary structure comprises 413 residues: Phosphopentomutase (413 aa).

Mn(2+) is bound by residues Asp11, Asp306, His311, Asp347, His348, and His359.

This sequence belongs to the phosphopentomutase family. It depends on Mn(2+) as a cofactor.

It is found in the cytoplasm. The enzyme catalyses 2-deoxy-alpha-D-ribose 1-phosphate = 2-deoxy-D-ribose 5-phosphate. It catalyses the reaction alpha-D-ribose 1-phosphate = D-ribose 5-phosphate. It functions in the pathway carbohydrate degradation; 2-deoxy-D-ribose 1-phosphate degradation; D-glyceraldehyde 3-phosphate and acetaldehyde from 2-deoxy-alpha-D-ribose 1-phosphate: step 1/2. Isomerase that catalyzes the conversion of deoxy-ribose 1-phosphate (dRib-1-P) and ribose 1-phosphate (Rib-1-P) to deoxy-ribose 5-phosphate (dRib-5-P) and ribose 5-phosphate (Rib-5-P), respectively. This chain is Phosphopentomutase, found in Helicobacter pylori (strain Shi470).